The following is a 499-amino-acid chain: NADH-quinone oxidoreductase subunit 14 (499 aa).

Helical transmembrane passes span 9 to 29, 37 to 57, 76 to 96, 104 to 124, 126 to 146, 161 to 181, 196 to 216, 235 to 255, 269 to 289, 301 to 321, 324 to 344, 369 to 389, 402 to 422, and 446 to 466; these read ILPE…GAYL, TLLW…GLGN, FAKV…ADYM, FEFP…VSAG, LLTL…VAAM, FVLG…VYGF, AGHL…GLSF, PTPV…ALIA, WSQI…IAGI, SSIA…AIGV, MLLY…FILS, ALAM…LGFF, GMGW…FYYL, and YLAL…MFGV.

Belongs to the complex I subunit 2 family. NDH-1 is composed of at least 14 different subunits, Nqo1 to Nqo14. The complex has a L-shaped structure, with the hydrophobic arm (subunits Nqo7, Nqo8, Nqo10 to Nqo14) embedded in the inner membrane and the hydrophilic peripheral arm (subunits Nqo1 to Nqo6, Nqo9) protruding into the bacterial cytoplasm. The hydrophilic domain contains all the redox centers.

The protein localises to the cell inner membrane. It carries out the reaction a quinone + NADH + 5 H(+)(in) = a quinol + NAD(+) + 4 H(+)(out). Its function is as follows. NDH-1 shuttles electrons from NADH, via FMN and iron-sulfur (Fe-S) centers, to quinones in the respiratory chain. The immediate electron acceptor for the enzyme in this species is believed to be ubiquinone. Couples the redox reaction to proton translocation (for every two electrons transferred, four hydrogen ions are translocated across the cytoplasmic membrane), and thus conserves the redox energy in a proton gradient. The chain is NADH-quinone oxidoreductase subunit 14 from Paracoccus denitrificans.